The chain runs to 99 residues: U1-theraphotoxin-Lsp1c (99 aa).

The first 23 residues, 1–23 (MRKITIRALLLCSLLLVFHTSAA), serve as a signal peptide directing secretion. A propeptide spanning residues 24-50 (AELQAQEGHLMIPGDTDTALETVDDER) is cleaved from the precursor. Intrachain disulfides connect Cys-54–Cys-67, Cys-58–Cys-91, Cys-72–Cys-74, and Cys-85–Cys-96.

The protein belongs to the neurotoxin 12 (Hwtx-2) family. 04 (lasiotoxin) subfamily. Expressed by the venom gland.

The protein resides in the secreted. Its function is as follows. Toxin that causes irreversible contractile paralysis into adult Aedes aegypti resulting in 100% mortality after 24 hours. The protein is U1-theraphotoxin-Lsp1c of Lasiodora sp. (strain IBSP 8539) (Brazilian salmon pink birdeater).